The primary structure comprises 396 residues: Probable protein phosphatase 2C 25 (396 aa).

Residues 32 to 98 (ESLSLTLSHR…SPPGGVLKRK (67 aa)) are disordered. Low complexity predominate over residues 44–61 (QTSSPSSPSTTVSSPKSP). The 254-residue stretch at 139–392 (GYSVYCKRGR…DDISVMLIPL (254 aa)) folds into the PPM-type phosphatase domain. 4 residues coordinate Mn(2+): Asp175, Gly176, Asp338, and Asp383.

It belongs to the PP2C family. In terms of assembly, interacts with MPK4 and MPK6. Requires Mg(2+) as cofactor. It depends on Mn(2+) as a cofactor.

It localises to the cytoplasm. Its subcellular location is the nucleus. It carries out the reaction O-phospho-L-seryl-[protein] + H2O = L-seryl-[protein] + phosphate. The enzyme catalyses O-phospho-L-threonyl-[protein] + H2O = L-threonyl-[protein] + phosphate. Its function is as follows. Protein phosphatase that negatively regulates defense respones. Inactivates MPK4 and MPK6 MAP kinases involved in stress and defense signaling. The protein is Probable protein phosphatase 2C 25 of Arabidopsis thaliana (Mouse-ear cress).